Consider the following 803-residue polypeptide: Volume-regulated anion channel subunit LRRC8C (803 aa).

At 1-22 the chain is on the cytoplasmic side; sequence MIPVTEFRQFSEQQPAFRVLKP. A helical membrane pass occupies residues 23 to 47; the sequence is WWDVFTDYLSVAMLMIGVFGCTLQV. Residues 48 to 124 are Extracellular-facing; that stretch reads MQDKIICLPK…CYERALHWYA (77 aa). Cystine bridges form between cysteine 54–cysteine 308 and cysteine 115–cysteine 293. 2 N-linked (GlcNAc...) asparagine glycosylation sites follow: asparagine 64 and asparagine 70. The chain crosses the membrane as a helical span at residues 125–144; the sequence is KYFPYLVLIHTLVFMLCSNF. The Cytoplasmic portion of the chain corresponds to 145–262; the sequence is WFKFPGSSSK…EEGDILYAMY (118 aa). A disordered region spans residues 177–209; that stretch reads EVSGEDSEEKDNRKNNMNRSNTIQSGPEDSLVN. A compositionally biased stretch (polar residues) spans 191–209; that stretch reads NNMNRSNTIQSGPEDSLVN. Residues serine 212 and serine 215 each carry the phosphoserine modification. Residues 263 to 284 traverse the membrane as a helical segment; the sequence is VRQTVLKVIKFLIIIAYNSALV. Residues 285 to 314 are Extracellular-facing; the sequence is SKVQFTVDCNVDIQDMTGYKNFSCNHTMAH. Residues 315–339 form a helical membrane-spanning segment; that stretch reads LFSKLSFCYLCFVSIYGLTCLYTLY. Residues 340 to 803 are Cytoplasmic-facing; it reads WLFYRSLREY…SDVREQMKTE (464 aa). 17 LRR repeats span residues 397-420, 421-443, 446-466, 467-488, 490-513, 515-537, 541-563, 565-587, 588-611, 613-635, 636-659, 660-682, 684-705, 706-728, 730-751, 753-774, and 776-799; these read ENKL…KLQT, NAHN…VFEI, LQSL…IAQL, DNLQ…ALSF, KENL…MYGL, NLEE…TLES, LKSL…VVDV, SHLQ…NLKK, MTNL…VFSL, SLQE…SFQH, LRKL…IKKL, TSLE…LFLC, KIRY…IGVL, QSLQ…LYFC, KLKT…IGNL, FLSY…LGDC, and ALKR…VREQ.

This sequence belongs to the LRRC8 family. As to quaternary structure, heterohexamer; oligomerizes with other LRRC8 proteins (LRRC8A, LRRC8B, LRRC8D and/or LRRC8E) to form a heterohexamer. Homoheptamer; inactive, likely because it is not targeted to the plasma membrane in the absence of LRRC8A. In vivo, the subunit composition may depend primarily on expression levels, and heterooligomeric channels containing various proportions of the different LRRC8 proteins may coexist. In terms of tissue distribution, expressed at highest levels in skeletal muscle, and at moderate levels in heart, lung and peripheral blood leukocytes.

It is found in the cell membrane. The protein resides in the endoplasmic reticulum membrane. It catalyses the reaction chloride(in) = chloride(out). The catalysed reaction is iodide(out) = iodide(in). It carries out the reaction taurine(out) = taurine(in). The enzyme catalyses 2',3'-cGAMP(out) = 2',3'-cGAMP(in). Non-essential component of the volume-regulated anion channel (VRAC, also named VSOAC channel), an anion channel required to maintain a constant cell volume in response to extracellular or intracellular osmotic changes. The VRAC channel conducts iodide better than chloride and can also conduct organic osmolytes like taurine. Plays a redundant role in the efflux of amino acids, such as aspartate and glutamate, in response to osmotic stress. The VRAC channel also mediates transport of immunoreactive cyclic dinucleotide GMP-AMP (2'-3'-cGAMP), an immune messenger produced in response to DNA virus in the cytosol. Channel activity requires LRRC8A plus at least one other family member (LRRC8B, LRRC8C, LRRC8D or LRRC8E); channel characteristics depend on the precise subunit composition. This is Volume-regulated anion channel subunit LRRC8C from Homo sapiens (Human).